We begin with the raw amino-acid sequence, 585 residues long: Serine/threonine-protein kinase PknI (585 aa).

The Cytoplasmic portion of the chain corresponds to 1-349; sequence MALASGVTFA…ASPTRRRPRR (349 aa). A Protein kinase domain is found at 12–252; it reads YTVVRMLGCS…SCREFADAMN (241 aa). ATP contacts are provided by residues 18–26 and lysine 41; that span reads LGCSAMGEV. Residues lysine 41, aspartate 90, and valine 92 each coordinate ADP. Aspartate 137 functions as the Proton acceptor in the catalytic mechanism. The chain crosses the membrane as a helical span at residues 350 to 370; that stretch reads ILVGAVAVLLLAGLFAVGIVI. The Extracellular portion of the chain corresponds to 371-585; that stretch reads GRKTNTTATE…PTTTAPGPGR (215 aa). A disordered region spans residues 546–585; it reads SGDLPPAVTVPDPATIPDTPDTTSTATLTPPTTTAPGPGR. Residues 554–585 show a composition bias toward low complexity; the sequence is TVPDPATIPDTPDTTSTATLTPPTTTAPGPGR.

The protein belongs to the protein kinase superfamily. Ser/Thr protein kinase family. Requires Mn(2+) as cofactor. Post-translationally, autophosphorylated at serine and threonine residues.

Its subcellular location is the cytoplasm. The protein resides in the cell membrane. The catalysed reaction is L-seryl-[protein] + ATP = O-phospho-L-seryl-[protein] + ADP + H(+). It catalyses the reaction L-threonyl-[protein] + ATP = O-phospho-L-threonyl-[protein] + ADP + H(+). Functionally, plays an important role in slowing down the growth of mycobacteria within the infected host. This chain is Serine/threonine-protein kinase PknI (pknI), found in Mycobacterium bovis (strain ATCC BAA-935 / AF2122/97).